Reading from the N-terminus, the 742-residue chain is Clamp-binding protein CrfC (742 aa).

Residues 41–45 (QLALP) form a clamp-binding consensus region. Residues 66–402 (SRLEMVLAIV…LWEDSLFAQP (337 aa)) enclose the Dynamin-type G domain. The interval 76–83 (GTMKAGKS) is G1 motif. Residues 102–104 (MTA) are G2 motif. Positions 236–239 (DTPG) are G3 motif. The G4 motif stretch occupies residues 297–300 (NKFD). A G5 motif region spans residues 331-334 (FPVS). The stretch at 440 to 472 (RAHGLNVACEQLRQNIHQVEESLQLLQLNQAQV) forms a coiled coil.

It belongs to the TRAFAC class dynamin-like GTPase superfamily. Dynamin/Fzo/YdjA family. As to quaternary structure, forms homooligomers. Binds to the beta sliding clamp processivity factor (DnaN) in the presence and absence of DNA, may bind to the clamp itself as homodimers or trimers. Homooligomers may be able to bind more than 1 clamp complex.

The protein localises to the cytoplasm. Functionally, important for the colocalization of sister nascent DNA strands after replication fork passage during DNA replication, and for positioning and subsequent partitioning of sister chromosomes. Does not have GTPase activity on its own. This Escherichia coli protein is Clamp-binding protein CrfC (crfC).